The sequence spans 207 residues: High mobility group protein B2 (207 aa).

DNA-binding regions (HMG box) lie at residues 9–79 and 95–163; these read PRGK…KNYV and PKRP…AAYR. 2 positions are modified to cysteine sulfonic acid (-SO3H); alternate: cysteine 23 and cysteine 45. Cysteine 23 and cysteine 45 form a disulfide bridge. Positions 52-76 are enriched in basic and acidic residues; it reads MSSKEKGKFEEMAKGDKARYDREMK. The disordered stretch occupies residues 52-102; that stretch reads MSSKEKGKFEEMAKGDKARYDREMKNYVPPKGEKKGKKKDPNAPKRPPSAF. Cysteine 106 is subject to Cysteine sulfonic acid (-SO3H). Positions 162–172 are enriched in basic and acidic residues; that stretch reads YRAKSKSDAGK. A disordered region spans residues 162 to 207; the sequence is YRAKSKSDAGKKGPGRPAGSKKKAEPEEEEEEEEDEEEEEEEEDEE. The segment covering 187–207 has biased composition (acidic residues); sequence PEEEEEEEEDEEEEEEEEDEE.

Belongs to the HMGB family. Reduction/oxidation of cysteine residues Cys-23, Cys-45 and Cys-106 and a possible intramolecular disulfide bond involving Cys-23 and Cys-45 give rise to different redox forms with specific functional activities in various cellular compartments: 1- fully reduced HMGB2 (HMGB2C23hC45hC106h), 2- disulfide HMGB2 (HMGB2C23-C45C106h) and 3- sulfonyl HMGB2 (HMGB2C23soC45soC106so).

It localises to the nucleus. The protein resides in the chromosome. The protein localises to the cytoplasm. It is found in the secreted. In terms of biological role, multifunctional protein with various roles in different cellular compartments. May act in a redox sensitive manner. Associates with chromatin and binds DNA with a preference to non-canonical DNA structures such as single-stranded DNA. Can bent DNA and enhance DNA flexibility by looping thus providing a mechanism to promote activities on various gene promoters. Proposed to be involved in the innate immune response to nucleic acids by acting as a cytoplasmic promiscuous immunogenic DNA/RNA sensor. Involved in inflammatory response to antigenic stimulus coupled with pro-inflammatory activity. This chain is High mobility group protein B2 (HMGB2), found in Gallus gallus (Chicken).